We begin with the raw amino-acid sequence, 334 residues long: MIDFSNFYQLIAKSPLSHWLETLPAQVAAWQREALHGKFREWERAVEFLPELTPWRLDLLHSVTAESETPLSEGHQLRVENLLKNLMPWRKGPYSLYGINIDTEWRSDWKWERVLPHLSDLTGRTILDVGCGSGYHMWRMIGAGAHLAVGIDPTQLFLCQFEAVRKLLGNDQRAHLLPLGIEQLPALEAFDTVFSMGVLYHRRSPLDHLWQLKDQLAPGGELVLETLVVEGDENTVLVPGDRYAQMRNVYFIPSAAALKMWLEKCGFIDVRIVDACVTSTDEQRRTEWMTSESLADFLDPQDQRKTVEGYPAPLRAVIIATKPETQQSLAKKAR.

Carboxy-S-adenosyl-L-methionine-binding positions include Lys91, Trp105, Lys110, Gly130, 152–154 (DPT), 181–182 (IE), Met196, Tyr200, and Arg315.

This sequence belongs to the class I-like SAM-binding methyltransferase superfamily. CmoB family. In terms of assembly, homotetramer.

It catalyses the reaction carboxy-S-adenosyl-L-methionine + 5-hydroxyuridine(34) in tRNA = 5-carboxymethoxyuridine(34) in tRNA + S-adenosyl-L-homocysteine + H(+). In terms of biological role, catalyzes carboxymethyl transfer from carboxy-S-adenosyl-L-methionine (Cx-SAM) to 5-hydroxyuridine (ho5U) to form 5-carboxymethoxyuridine (cmo5U) at position 34 in tRNAs. The sequence is that of tRNA U34 carboxymethyltransferase from Klebsiella pneumoniae (strain 342).